The sequence spans 546 residues: Delta-1-pyrroline-5-carboxylate dehydrogenase (546 aa).

Position 279 to 284 (279 to 284 (KDISSN)) interacts with NAD(+). Glu-297 acts as the Proton acceptor in catalysis. Residue Cys-331 is the Nucleophile of the active site.

It belongs to the aldehyde dehydrogenase family.

The protein localises to the cytoplasm. The catalysed reaction is L-glutamate 5-semialdehyde + NAD(+) + H2O = L-glutamate + NADH + 2 H(+). It participates in amino-acid degradation; L-proline degradation into L-glutamate; L-glutamate from L-proline: step 2/2. This Agaricus bisporus (White button mushroom) protein is Delta-1-pyrroline-5-carboxylate dehydrogenase (pruA).